The chain runs to 600 residues: Chaperone protein DnaK (600 aa).

Thr175 carries the phosphothreonine; by autocatalysis modification. Residues 569 to 578 (SFAQATAQQA) show a composition bias toward low complexity. The segment at 569–600 (SFAQATAQQANTSESDPKADDSNTIDAEIKQD) is disordered. Positions 583-600 (SDPKADDSNTIDAEIKQD) are enriched in basic and acidic residues.

Belongs to the heat shock protein 70 family.

Acts as a chaperone. This Mesomycoplasma hyopneumoniae (strain J / ATCC 25934 / NCTC 10110) (Mycoplasma hyopneumoniae) protein is Chaperone protein DnaK.